The following is a 78-amino-acid chain: UPF0349 protein BPUM_2879 (78 aa).

Belongs to the UPF0349 family.

The chain is UPF0349 protein BPUM_2879 from Bacillus pumilus (strain SAFR-032).